The sequence spans 259 residues: Pimeloyl-[acyl-carrier protein] methyl ester esterase (259 aa).

Residues 16–244 (LVFIHGWGLN…ASHAPFLSHP (229 aa)) enclose the AB hydrolase-1 domain. Residues Trp22, 82-83 (SL), and 143-147 (FFNIQ) each bind substrate. Ser82 (nucleophile) is an active-site residue. Catalysis depends on residues Asp207 and His237. His237 contacts substrate.

The protein belongs to the AB hydrolase superfamily. Carboxylesterase BioH family. As to quaternary structure, monomer.

Its subcellular location is the cytoplasm. The catalysed reaction is 6-carboxyhexanoyl-[ACP] methyl ester + H2O = 6-carboxyhexanoyl-[ACP] + methanol + H(+). Its pathway is cofactor biosynthesis; biotin biosynthesis. Functionally, the physiological role of BioH is to remove the methyl group introduced by BioC when the pimeloyl moiety is complete. It allows to synthesize pimeloyl-ACP via the fatty acid synthetic pathway through the hydrolysis of the ester bonds of pimeloyl-ACP esters. The chain is Pimeloyl-[acyl-carrier protein] methyl ester esterase from Wigglesworthia glossinidia brevipalpis.